Here is a 121-residue protein sequence, read N- to C-terminus: Large ribosomal subunit protein bL12 (121 aa).

It belongs to the bacterial ribosomal protein bL12 family. In terms of assembly, homodimer. Part of the ribosomal stalk of the 50S ribosomal subunit. Forms a multimeric L10(L12)X complex, where L10 forms an elongated spine to which 2 to 4 L12 dimers bind in a sequential fashion. Binds GTP-bound translation factors.

Functionally, forms part of the ribosomal stalk which helps the ribosome interact with GTP-bound translation factors. Is thus essential for accurate translation. The chain is Large ribosomal subunit protein bL12 from Mesomycoplasma hyopneumoniae (strain 232) (Mycoplasma hyopneumoniae).